A 382-amino-acid chain; its full sequence is Ribosomal RNA large subunit methyltransferase F (382 aa).

Disordered regions lie at residues 1 to 53 (MTKP…LHRD) and 269 to 288 (NRAS…KSQL). Positions 8 to 24 (ASRKPVTKSGRNSKRSR) are enriched in basic residues. The span at 269–286 (NRASKGHKLEPKAPKDKS) shows a compositional bias: basic and acidic residues.

The protein belongs to the methyltransferase superfamily. METTL16/RlmF family.

The protein localises to the cytoplasm. It carries out the reaction adenosine(1618) in 23S rRNA + S-adenosyl-L-methionine = N(6)-methyladenosine(1618) in 23S rRNA + S-adenosyl-L-homocysteine + H(+). Functionally, specifically methylates the adenine in position 1618 of 23S rRNA. This chain is Ribosomal RNA large subunit methyltransferase F, found in Shewanella woodyi (strain ATCC 51908 / MS32).